A 155-amino-acid polypeptide reads, in one-letter code: Ciliary microtubule inner protein 2C (155 aa).

The protein belongs to the CIMIP2 family.

The protein localises to the cytoplasm. The protein resides in the cytoskeleton. Its subcellular location is the cilium axoneme. Functionally, microtubule inner protein (MIP) part of the dynein-decorated doublet microtubules (DMTs) in cilia axoneme, which is required for motile cilia beating. This chain is Ciliary microtubule inner protein 2C (cimip2cb), found in Xenopus laevis (African clawed frog).